The sequence spans 326 residues: Ornithine carbamoyltransferase (326 aa).

Carbamoyl phosphate contacts are provided by residues 57 to 60, Gln84, Arg108, and 135 to 138; these read STRT and HPTQ. L-ornithine-binding positions include Asn169, Asp233, and 237–238; that span reads SM. Position 275 to 276 (275 to 276) interacts with carbamoyl phosphate; that stretch reads CL.

It belongs to the aspartate/ornithine carbamoyltransferase superfamily. OTCase family.

Its subcellular location is the cytoplasm. It catalyses the reaction carbamoyl phosphate + L-ornithine = L-citrulline + phosphate + H(+). The protein operates within amino-acid biosynthesis; L-arginine biosynthesis; L-arginine from L-ornithine and carbamoyl phosphate: step 1/3. In terms of biological role, reversibly catalyzes the transfer of the carbamoyl group from carbamoyl phosphate (CP) to the N(epsilon) atom of ornithine (ORN) to produce L-citrulline. The chain is Ornithine carbamoyltransferase from Escherichia coli O6:K15:H31 (strain 536 / UPEC).